The sequence spans 549 residues: uncharacterized protein (549 aa).

12 consecutive transmembrane segments (helical) span residues 1–21 (MEIFFTILIMTLVVSLSGVVT), 28–48 (IPLPLMQIAIGALLAWPTFGL), 50–70 (VEFDPELFLVLFIPPLLFADG), 85–105 (IFGLALALVVVTVVGIGFLIY), 106–126 (WVVPGIPLIPAFALAAVLSPT), 165–185 (FAVAVAMGTMIFTVGGATVEF), 187–207 (KVAIGGILAGFVVSWLYGRSL), 222–242 (IVLLFLLPFASYLIAEHIGVS), 278–298 (LEFVFNGMVFLLLGLQLPGIL), 310–330 (NVEIWMLFTNIILIYAALMLV), 361–381 (ILIASFAGVRGAITLAGVLSI), and 398–418 (VFLAAGVILFSLFVGVVMLPI).

Belongs to the monovalent cation:proton antiporter 1 (CPA1) transporter (TC 2.A.36) family.

The protein resides in the cell inner membrane. This is an uncharacterized protein from Escherichia coli (strain K12).